Reading from the N-terminus, the 350-residue chain is Ferredoxin--NADP reductase (350 aa).

Residues Asp49, Gln57, Tyr62, Val102, Phe136, Asp303, and Thr344 each contribute to the FAD site.

Belongs to the ferredoxin--NADP reductase type 2 family. In terms of assembly, homodimer. FAD is required as a cofactor.

It carries out the reaction 2 reduced [2Fe-2S]-[ferredoxin] + NADP(+) + H(+) = 2 oxidized [2Fe-2S]-[ferredoxin] + NADPH. This is Ferredoxin--NADP reductase from Granulibacter bethesdensis (strain ATCC BAA-1260 / CGDNIH1).